The primary structure comprises 416 residues: Transcription factor PIL1 (416 aa).

3 disordered regions span residues 1-24 (MEAKPLASSSSEPNMISPSSNIKP), 89-113 (VSQSKPQQDKETNEQMNNNKKKLKS), and 197-231 (ESTYLSNNSDDESDDAKTQVHARTRKPVTKRKRST). The segment covering 8–22 (SSSSEPNMISPSSNI) has biased composition (low complexity). Residues 95 to 124 (QQDKETNEQMNNNKKKLKSSKIEFERNVSK) are a coiled coil. The span at 216–229 (VHARTRKPVTKRKR) shows a compositional bias: basic residues. Positions 229-278 (RSTEVHKLYERKRRDEFNKKMRALQDLLPNCYKDDKASLLDEAIKYMRTL) constitute a bHLH domain.

In terms of assembly, homodimer. Interacts with APRR1/TOC1. Associates to PTAC12/HMR/PAP5 which acts as a transcriptional coactivator. As to expression, mainly expressed in stems, fruits and flowers and, to a lower extent, in leaves, seedlings and roots. Accumulates in etiolated seedlings.

The protein resides in the nucleus. Functionally, transcription factor. Involved in responses to transient and long-term shade. Required for the light-mediated inhibition of hypocotyl elongation. Necessary for rapid light-induced expression of the photomorphogenesis- and circadian-related gene APRR9. Seems to play a role in multiple PHYB responses, such as flowering transition and petiole elongation. This is Transcription factor PIL1 from Arabidopsis thaliana (Mouse-ear cress).